Consider the following 134-residue polypeptide: uncharacterized protein (134 aa).

This is an uncharacterized protein from Archaeoglobus fulgidus (strain ATCC 49558 / DSM 4304 / JCM 9628 / NBRC 100126 / VC-16).